A 1377-amino-acid polypeptide reads, in one-letter code: Zinc finger MYM-type protein 2 (1377 aa).

Glycyl lysine isopeptide (Lys-Gly) (interchain with G-Cter in SUMO2) cross-links involve residues K48, K88, K98, and K104. Composition is skewed to polar residues over residues 85 to 115 (TSSKNEELQGNDSKITPSSKELASQKGSVSE) and 127 to 138 (TNQGQEKNSSNF). The tract at residues 85–177 (TSSKNEELQG…GMGNSGITTE (93 aa)) is disordered. Residues 139–152 (IERRPPETKNRTND) show a composition bias toward basic and acidic residues. A Glycyl lysine isopeptide (Lys-Gly) (interchain with G-Cter in SUMO2) cross-link involves residue K147. Positions 153–164 (VDFSTSSFSRSK) are enriched in polar residues. At S159 the chain carries Phosphoserine. Glycyl lysine isopeptide (Lys-Gly) (interchain with G-Cter in SUMO2) cross-links involve residues K253 and K297. The interval 273 to 305 (NGESATHHNPDSWISQSASFPRNQKQPGVDSLS) is disordered. A compositionally biased stretch (polar residues) spans 284–298 (SWISQSASFPRNQKQ). Phosphoserine is present on S305. Glycyl lysine isopeptide (Lys-Gly) (interchain with G-Cter in SUMO2) cross-links involve residues K312, K325, K348, and K366. Residues 327 to 363 (VKVTCANCKKPLQKGQTAYQRKGSAHLFCSTTCLSSF) form an MYM-type 1 zinc finger. An MYM-type 2 zinc finger spans residues 369–409 (PKKLCVMCKKDITTMKGTIVAQVDSSESFQEFCSTSCLSLY). Glycyl lysine isopeptide (Lys-Gly) (interchain with G-Cter in SUMO2) cross-links involve residues K417, K441, K491, K503, K513, K529, and K532. 2 consecutive MYM-type zinc fingers follow at residues 421-456 (NKSRCTICGKLTEIRHEVSFKNMTHKLCSDHCFNRY) and 463-502 (IMNCCEQCGEYLPSKGAGNNVLVIDGQQKRFCCQSCVSEY). Residues 533-570 (LTTCTGCRTQCRFFDMTQCIGPNGYMEPYCSTACMNSH) form an MYM-type 5 zinc finger. Glycyl lysine isopeptide (Lys-Gly) (interchain with G-Cter in SUMO2) cross-links involve residues K576, K603, K649, K658, K688, K700, and K709. The MYM-type 6 zinc finger occupies 636–671 (QLKCNYCKNSFCSKPEILEWENKVHQFCSKTCSDDY). 2 consecutive MYM-type zinc fingers follow at residues 723-758 (RCVTCNYCSQLCKKGATKELDGVVRDFCSEDCCKKF) and 764-799 (KAARCDCCKSQGTLKERVQWRGEMKHFCDQHCLLRF). Glycyl lysine isopeptide (Lys-Gly) (interchain with G-Cter in SUMO2) cross-links involve residues K764, K788, K812, and K829. Phosphoserine occurs at positions 838 and 958. Disordered stretches follow at residues 983 to 1002 (LLKNSDPETQSSMPDVPYEP) and 1028 to 1064 (VFGEEYEEQPRPRSKKKGAKRKAVSGYQSHDDSSDNS). The segment covering 1039–1050 (PRSKKKGAKRKA) has biased composition (basic residues). The residue at position 1064 (S1064) is a Phosphoserine. Position 1376 is a phosphothreonine (T1376).

As to quaternary structure, can form homodimers. May be a component of a BHC histone deacetylase complex that contains HDAC1, HDAC2, HMG20B/BRAF35, KDM1A, RCOR1/CoREST, PHF21A/BHC80, ZMYM2, ZNF217, ZMYM3, GSE1 and GTF2I. Interacts with FOXP1 and FOXP2.

It is found in the nucleus. Functionally, involved in the negative regulation of transcription. This chain is Zinc finger MYM-type protein 2 (ZMYM2), found in Homo sapiens (Human).